Consider the following 306-residue polypeptide: Curved DNA-binding protein (306 aa).

The region spanning 5 to 69 (DYYAIMGVKP…QRRAEYDQLW (65 aa)) is the J domain.

The protein localises to the cytoplasm. It localises to the nucleoid. DNA-binding protein that preferentially recognizes a curved DNA sequence. It is probably a functional analog of DnaJ; displays overlapping activities with DnaJ, but functions under different conditions, probably acting as a molecular chaperone in an adaptive response to environmental stresses other than heat shock. Lacks autonomous chaperone activity; binds native substrates and targets them for recognition by DnaK. Its activity is inhibited by the binding of CbpM. This is Curved DNA-binding protein from Salmonella paratyphi A (strain ATCC 9150 / SARB42).